We begin with the raw amino-acid sequence, 437 residues long: Chromosomal replication initiator protein DnaA (437 aa).

A domain I, interacts with DnaA modulators region spans residues 1–72 (MEQFNAFKSL…ESLYEGIKSV (72 aa)). The segment at 72–99 (VNFVNEQDFFFNLAKLEENSRDTLYQNS) is domain II. The segment at 100 to 320 (GLSKNYTFQN…GIATKLLFFA (221 aa)) is domain III, AAA+ region. Residues Gly-144, Gly-146, Lys-147, and Thr-148 each coordinate ATP. The tract at residues 321–437 (KTSKQNLINT…LRDVITSLVI (117 aa)) is domain IV, binds dsDNA.

It belongs to the DnaA family. Oligomerizes as a right-handed, spiral filament on DNA at oriC.

Its subcellular location is the cytoplasm. Plays an essential role in the initiation and regulation of chromosomal replication. ATP-DnaA binds to the origin of replication (oriC) to initiate formation of the DNA replication initiation complex once per cell cycle. Binds the DnaA box (a 9 base pair repeat at the origin) and separates the double-stranded (ds)DNA. Forms a right-handed helical filament on oriC DNA; dsDNA binds to the exterior of the filament while single-stranded (ss)DNA is stabiized in the filament's interior. The ATP-DnaA-oriC complex binds and stabilizes one strand of the AT-rich DNA unwinding element (DUE), permitting loading of DNA polymerase. After initiation quickly degrades to an ADP-DnaA complex that is not apt for DNA replication. Binds acidic phospholipids. The polypeptide is Chromosomal replication initiator protein DnaA (Mycoplasma genitalium (strain ATCC 33530 / DSM 19775 / NCTC 10195 / G37) (Mycoplasmoides genitalium)).